The following is a 297-amino-acid chain: Putative 6-phosphogluconate dehydrogenase YqeC (297 aa).

NAD(+)-binding positions include 7–12 (GLGKMG) and Asn-94. Residues Asn-94 and 120–122 (SGG) contribute to the substrate site. Residue Lys-170 is the Proton acceptor of the active site. Residue 173–174 (HN) participates in substrate binding. Glu-177 functions as the Proton donor in the catalytic mechanism. Substrate is bound by residues Tyr-178 and Arg-268.

Belongs to the 6-phosphogluconate dehydrogenase family.

In terms of biological role, may act as NAD-dependent 6-P-gluconate dehydrogenase. In Bacillus subtilis (strain 168), this protein is Putative 6-phosphogluconate dehydrogenase YqeC (yqeC).